The sequence spans 337 residues: Holliday junction branch migration complex subunit RuvB (337 aa).

The segment at M1–Y180 is large ATPase domain (RuvB-L). ATP-binding positions include L19, R20, G61, K64, T65, T66, E127–F129, R170, Y180, and R217. Residue T65 coordinates Mg(2+). A small ATPAse domain (RuvB-S) region spans residues T181–E251. The tract at residues D254–F337 is head domain (RuvB-H). Residues R309 and R314 each coordinate DNA.

This sequence belongs to the RuvB family. As to quaternary structure, homohexamer. Forms an RuvA(8)-RuvB(12)-Holliday junction (HJ) complex. HJ DNA is sandwiched between 2 RuvA tetramers; dsDNA enters through RuvA and exits via RuvB. An RuvB hexamer assembles on each DNA strand where it exits the tetramer. Each RuvB hexamer is contacted by two RuvA subunits (via domain III) on 2 adjacent RuvB subunits; this complex drives branch migration. In the full resolvosome a probable DNA-RuvA(4)-RuvB(12)-RuvC(2) complex forms which resolves the HJ.

The protein resides in the cytoplasm. The enzyme catalyses ATP + H2O = ADP + phosphate + H(+). Functionally, the RuvA-RuvB-RuvC complex processes Holliday junction (HJ) DNA during genetic recombination and DNA repair, while the RuvA-RuvB complex plays an important role in the rescue of blocked DNA replication forks via replication fork reversal (RFR). RuvA specifically binds to HJ cruciform DNA, conferring on it an open structure. The RuvB hexamer acts as an ATP-dependent pump, pulling dsDNA into and through the RuvAB complex. RuvB forms 2 homohexamers on either side of HJ DNA bound by 1 or 2 RuvA tetramers; 4 subunits per hexamer contact DNA at a time. Coordinated motions by a converter formed by DNA-disengaged RuvB subunits stimulates ATP hydrolysis and nucleotide exchange. Immobilization of the converter enables RuvB to convert the ATP-contained energy into a lever motion, pulling 2 nucleotides of DNA out of the RuvA tetramer per ATP hydrolyzed, thus driving DNA branch migration. The RuvB motors rotate together with the DNA substrate, which together with the progressing nucleotide cycle form the mechanistic basis for DNA recombination by continuous HJ branch migration. Branch migration allows RuvC to scan DNA until it finds its consensus sequence, where it cleaves and resolves cruciform DNA. The protein is Holliday junction branch migration complex subunit RuvB of Citrifermentans bemidjiense (strain ATCC BAA-1014 / DSM 16622 / JCM 12645 / Bem) (Geobacter bemidjiensis).